Reading from the N-terminus, the 188-residue chain is Type II secretion system protein H (188 aa).

The propeptide at 1-10 is leader sequence; the sequence is MKRSTRKQQG. Residue Phe11 is modified to N-methylphenylalanine. The helical transmembrane segment at 13 to 35 threads the bilayer; it reads LLEMMLVVLLAGIAAGMVVMAFP.

This sequence belongs to the GSP H family. Type II secretion is composed of four main components: the outer membrane complex, the inner membrane complex, the cytoplasmic secretion ATPase and the periplasm-spanning pseudopilus. Interacts with core component OutG. Cleaved by prepilin peptidase. In terms of processing, methylated by prepilin peptidase at the amino group of the N-terminal phenylalanine once the leader sequence is cleaved by prepilin peptidase.

Its subcellular location is the cell inner membrane. Functionally, component of the type II secretion system required for the energy-dependent secretion of extracellular factors such as proteases and toxins from the periplasm. Part of the pseudopilus tip complex that is critical for the recognition and binding of secretion substrates. In Pectobacterium carotovorum subsp. carotovorum (Erwinia carotovora subsp. carotovora), this protein is Type II secretion system protein H (outH).